The primary structure comprises 72 residues: Cytochrome c oxidase subunit 8C, mitochondrial (72 aa).

Residues Met1–Ser29 constitute a mitochondrion transit peptide. The Mitochondrial matrix segment spans residues His30 to Thr40. Residues Pro41 to Ser64 traverse the membrane as a helical segment. Residues Asn65–Glu72 are Mitochondrial intermembrane-facing.

Belongs to the cytochrome c oxidase VIII family. Component of the cytochrome c oxidase (complex IV, CIV), a multisubunit enzyme composed of 14 subunits. The complex is composed of a catalytic core of 3 subunits MT-CO1, MT-CO2 and MT-CO3, encoded in the mitochondrial DNA, and 11 supernumerary subunits COX4I, COX5A, COX5B, COX6A, COX6B, COX6C, COX7A, COX7B, COX7C, COX8 and NDUFA4, which are encoded in the nuclear genome. The complex exists as a monomer or a dimer and forms supercomplexes (SCs) in the inner mitochondrial membrane with NADH-ubiquinone oxidoreductase (complex I, CI) and ubiquinol-cytochrome c oxidoreductase (cytochrome b-c1 complex, complex III, CIII), resulting in different assemblies (supercomplex SCI(1)III(2)IV(1) and megacomplex MCI(2)III(2)IV(2)).

The protein resides in the mitochondrion inner membrane. The protein operates within energy metabolism; oxidative phosphorylation. In terms of biological role, component of the cytochrome c oxidase, the last enzyme in the mitochondrial electron transport chain which drives oxidative phosphorylation. The respiratory chain contains 3 multisubunit complexes succinate dehydrogenase (complex II, CII), ubiquinol-cytochrome c oxidoreductase (cytochrome b-c1 complex, complex III, CIII) and cytochrome c oxidase (complex IV, CIV), that cooperate to transfer electrons derived from NADH and succinate to molecular oxygen, creating an electrochemical gradient over the inner membrane that drives transmembrane transport and the ATP synthase. Cytochrome c oxidase is the component of the respiratory chain that catalyzes the reduction of oxygen to water. Electrons originating from reduced cytochrome c in the intermembrane space (IMS) are transferred via the dinuclear copper A center (CU(A)) of subunit 2 and heme A of subunit 1 to the active site in subunit 1, a binuclear center (BNC) formed by heme A3 and copper B (CU(B)). The BNC reduces molecular oxygen to 2 water molecules using 4 electrons from cytochrome c in the IMS and 4 protons from the mitochondrial matrix. This is Cytochrome c oxidase subunit 8C, mitochondrial (Cox8c) from Rattus norvegicus (Rat).